The chain runs to 365 residues: tRNA/tmRNA (uracil-C(5))-methyltransferase (365 aa).

Gln-189, Tyr-217, Asn-222, Glu-238, and Asp-298 together coordinate S-adenosyl-L-methionine. The Nucleophile role is filled by Cys-323. The active-site Proton acceptor is the Glu-357.

It belongs to the class I-like SAM-binding methyltransferase superfamily. RNA M5U methyltransferase family. TrmA subfamily.

The catalysed reaction is uridine(54) in tRNA + S-adenosyl-L-methionine = 5-methyluridine(54) in tRNA + S-adenosyl-L-homocysteine + H(+). It carries out the reaction uridine(341) in tmRNA + S-adenosyl-L-methionine = 5-methyluridine(341) in tmRNA + S-adenosyl-L-homocysteine + H(+). Functionally, dual-specificity methyltransferase that catalyzes the formation of 5-methyluridine at position 54 (m5U54) in all tRNAs, and that of position 341 (m5U341) in tmRNA (transfer-mRNA). This is tRNA/tmRNA (uracil-C(5))-methyltransferase from Shewanella sp. (strain W3-18-1).